The sequence spans 282 residues: Pantothenate synthetase (282 aa).

Methionine 29 to histidine 36 lines the ATP pocket. Histidine 36 acts as the Proton donor in catalysis. Glutamine 60 is a (R)-pantoate binding site. Glutamine 60 contacts beta-alanine. Glycine 146 to aspartate 149 contacts ATP. Glutamine 152 serves as a coordination point for (R)-pantoate. ATP contacts are provided by residues isoleucine 175 and lysine 183 to arginine 186.

Belongs to the pantothenate synthetase family. As to quaternary structure, homodimer.

It is found in the cytoplasm. It catalyses the reaction (R)-pantoate + beta-alanine + ATP = (R)-pantothenate + AMP + diphosphate + H(+). The protein operates within cofactor biosynthesis; (R)-pantothenate biosynthesis; (R)-pantothenate from (R)-pantoate and beta-alanine: step 1/1. Its function is as follows. Catalyzes the condensation of pantoate with beta-alanine in an ATP-dependent reaction via a pantoyl-adenylate intermediate. This Clostridioides difficile (strain 630) (Peptoclostridium difficile) protein is Pantothenate synthetase.